Here is a 418-residue protein sequence, read N- to C-terminus: Glycine betaine transport ATP-binding protein OpuAA (418 aa).

The region spanning 34 to 270 is the ABC transporter domain; that stretch reads KTKKEILKAT…PSNEYVEKFV (237 aa). An ATP-binding site is contributed by 66-73; sequence GLSGSGKS. CBS domains are found at residues 284-340 and 344-403; these read IMKR…DLSL and LNTE…INAE.

The protein belongs to the ABC transporter superfamily. In terms of assembly, the complex is composed of two ATP-binding proteins (OpuAA), two transmembrane proteins (OpuAB) and a solute-binding protein (OpuAC).

The enzyme catalyses a quaternary ammonium(out) + ATP + H2O = a quaternary ammonium(in) + ADP + phosphate + H(+). Functionally, involved in a multicomponent binding-protein-dependent transport system for glycine betaine. Probably responsible for energy coupling to the transport system. This is Glycine betaine transport ATP-binding protein OpuAA (opuAA) from Bacillus subtilis (strain 168).